Reading from the N-terminus, the 329-residue chain is Ketol-acid reductoisomerase (NADP(+)) (329 aa).

In terms of domain architecture, KARI N-terminal Rossmann spans 1–181; the sequence is MKIYYDQDAD…GGTRGGVLTT (181 aa). NADP(+) is bound by residues 24-27, arginine 47, and 82-85; these read YGSQ and DQHQ. The active site involves histidine 107. Glycine 133 is a binding site for NADP(+). Residues 182–327 form the KARI C-terminal knotted domain; that stretch reads TFKEETETDL…AKLRGMMSWL (146 aa). Mg(2+) is bound by residues aspartate 190, glutamate 194, glutamate 226, and glutamate 230. Residue serine 251 participates in substrate binding.

Belongs to the ketol-acid reductoisomerase family. It depends on Mg(2+) as a cofactor.

The catalysed reaction is (2R)-2,3-dihydroxy-3-methylbutanoate + NADP(+) = (2S)-2-acetolactate + NADPH + H(+). The enzyme catalyses (2R,3R)-2,3-dihydroxy-3-methylpentanoate + NADP(+) = (S)-2-ethyl-2-hydroxy-3-oxobutanoate + NADPH + H(+). It functions in the pathway amino-acid biosynthesis; L-isoleucine biosynthesis; L-isoleucine from 2-oxobutanoate: step 2/4. Its pathway is amino-acid biosynthesis; L-valine biosynthesis; L-valine from pyruvate: step 2/4. In terms of biological role, involved in the biosynthesis of branched-chain amino acids (BCAA). Catalyzes an alkyl-migration followed by a ketol-acid reduction of (S)-2-acetolactate (S2AL) to yield (R)-2,3-dihydroxy-isovalerate. In the isomerase reaction, S2AL is rearranged via a Mg-dependent methyl migration to produce 3-hydroxy-3-methyl-2-ketobutyrate (HMKB). In the reductase reaction, this 2-ketoacid undergoes a metal-dependent reduction by NADPH to yield (R)-2,3-dihydroxy-isovalerate. The polypeptide is Ketol-acid reductoisomerase (NADP(+)) (Solidesulfovibrio magneticus (strain ATCC 700980 / DSM 13731 / RS-1) (Desulfovibrio magneticus)).